The primary structure comprises 454 residues: Ornithine aminotransferase (454 aa).

Position 280 is an N6-(pyridoxal phosphate)lysine (K280).

Belongs to the class-III pyridoxal-phosphate-dependent aminotransferase family. Pyridoxal 5'-phosphate is required as a cofactor.

It localises to the cytoplasm. The enzyme catalyses a 2-oxocarboxylate + L-ornithine = L-glutamate 5-semialdehyde + an L-alpha-amino acid. It participates in amino-acid biosynthesis; L-proline biosynthesis; L-glutamate 5-semialdehyde from L-ornithine: step 1/1. This chain is Ornithine aminotransferase (otaA), found in Emericella nidulans (strain FGSC A4 / ATCC 38163 / CBS 112.46 / NRRL 194 / M139) (Aspergillus nidulans).